A 276-amino-acid polypeptide reads, in one-letter code: Large ribosomal subunit protein uL2 (276 aa).

Residues V224 to R276 form a disordered region. Basic and acidic residues predominate over residues D230–E242.

It belongs to the universal ribosomal protein uL2 family. Part of the 50S ribosomal subunit. Forms a bridge to the 30S subunit in the 70S ribosome.

Its function is as follows. One of the primary rRNA binding proteins. Required for association of the 30S and 50S subunits to form the 70S ribosome, for tRNA binding and peptide bond formation. It has been suggested to have peptidyltransferase activity; this is somewhat controversial. Makes several contacts with the 16S rRNA in the 70S ribosome. This chain is Large ribosomal subunit protein uL2, found in Polynucleobacter asymbioticus (strain DSM 18221 / CIP 109841 / QLW-P1DMWA-1) (Polynucleobacter necessarius subsp. asymbioticus).